Reading from the N-terminus, the 1150-residue chain is MSLRFIYGRAGSGKSQYCLNSIKNRIEEDIDRPLILLVPEQFSFQAEKNLIEVLDEKTGFKTQVLSFKRMAYRVFNEVGGITAKHMNESGKSMLLYNIIEDNKNNLKVFKKAAKRQGFITTISDIITEFKRYNITPEIILNNLENIEGDNLKYKMEDLALIFSQFETRLHKNYIDNEDDLTILVEKLNKSKQFDNAEIWIDEFSSFSPQEYSVLEKLLLKSYRINITLCTDYLNQGRFVDTTDVFSPIKNTENKLLQIIEDNNIKLDKPIALKCDPCARFKNSAELQHLEKNMFSFPYKEYKNETKDICMLKTLNQFTEIENTAKDIIKLCIDKGCRFKDIAVITGDLEGYENIISSVFLQYNIPFFIDKKREINNNPIIVLILSALEVLSKNWTYESVFRYLKTGLLDINNEEMDILENYVLANGIKGYQWTNDKPWEHKSFSNYELEDQALKELLAKINDIRYKAMEPIVTLNKNFKSIDKAKEFCEVLYEFLCNINLPDKIQNMIEDFKVEGEIEKASEYNQIWNIVMEVLDQIVEVIGEEKISLKEFFKILQTGFSEYEIGLIPPTLDQVMVGSITRLRSHNINTLYIVGVNDGIFPSPLKEEGILSDDDREFLGDKGLEIAKDTKSIAFEEQFLVYSTLTTPSKYLRLSYPIADGEGKTLRPSIIISRIKKIFANICEENDIVKLNGEEEELKNISSAKPTFNYLISNLRKDVEGVKIDNIWGDTYKWYLENEFWIEKLNRLIKGFDYTNQSKYIETKKIRNLYGKPLKISVSRVEKFSQCPFAYFVQYGLKAKDRKIFNLSYPDLGIFMHSILEKFSHELEKKGLEWDTMDLNWAEEEIDKLINEELDNKSLDILNSSKRYEYVTKSVKKILKRSIWLIGEHIKRGNFKPSYYELSFDIDGDYPPIAMELHSGEVINLIGRVDRVDLLQKDGATYLKIIDYKSGIKEFKLSDVYYGLQLQLLIYLDAILTELAERSGINGEPGALLYLKLDDPIVKNTVDMSDEEIEKSIIKNLKMKGLILNDPNVIRDMDNIISGISDIIPVMVKKDGGVSEGRSSVATKEEFETLRKYVRYTIIEICEEMLEGNIEIKPYKKKDGSSCDYCIYSSVCKFDTNIRGNKYNILIDKKDEEVWDAIKKKLEYKNI.

Glycine 8–serine 15 contributes to the ATP binding site. Cysteine 786, cysteine 1106, cysteine 1109, and cysteine 1115 together coordinate [4Fe-4S] cluster.

Belongs to the helicase family. AddB/RexB type 1 subfamily. As to quaternary structure, heterodimer of AddA and AddB. It depends on Mg(2+) as a cofactor. [4Fe-4S] cluster serves as cofactor.

In terms of biological role, the heterodimer acts as both an ATP-dependent DNA helicase and an ATP-dependent, dual-direction single-stranded exonuclease. Recognizes the chi site generating a DNA molecule suitable for the initiation of homologous recombination. The AddB subunit has 5' -&gt; 3' nuclease activity but not helicase activity. This is ATP-dependent helicase/deoxyribonuclease subunit B from Clostridium botulinum (strain Langeland / NCTC 10281 / Type F).